A 238-amino-acid polypeptide reads, in one-letter code: 1-(5-phosphoribosyl)-5-[(5-phosphoribosylamino)methylideneamino] imidazole-4-carboxamide isomerase (238 aa).

Catalysis depends on Asp-8, which acts as the Proton acceptor. Residue Asp-129 is the Proton donor of the active site.

Belongs to the HisA/HisF family.

The protein resides in the cytoplasm. It carries out the reaction 1-(5-phospho-beta-D-ribosyl)-5-[(5-phospho-beta-D-ribosylamino)methylideneamino]imidazole-4-carboxamide = 5-[(5-phospho-1-deoxy-D-ribulos-1-ylimino)methylamino]-1-(5-phospho-beta-D-ribosyl)imidazole-4-carboxamide. It functions in the pathway amino-acid biosynthesis; L-histidine biosynthesis; L-histidine from 5-phospho-alpha-D-ribose 1-diphosphate: step 4/9. The polypeptide is 1-(5-phosphoribosyl)-5-[(5-phosphoribosylamino)methylideneamino] imidazole-4-carboxamide isomerase (Lacticaseibacillus paracasei (strain ATCC 334 / BCRC 17002 / CCUG 31169 / CIP 107868 / KCTC 3260 / NRRL B-441) (Lactobacillus paracasei)).